Reading from the N-terminus, the 532-residue chain is Methionine--tRNA ligase (532 aa).

A 'HIGH' region motif is present at residues Tyr-16–Ser-26. Zn(2+) is bound by residues Cys-131, Cys-134, Cys-149, and His-152. Positions Lys-305–Ser-309 match the 'KMSKS' region motif. Position 308 (Lys-308) interacts with ATP.

This sequence belongs to the class-I aminoacyl-tRNA synthetase family. MetG type 2A subfamily. As to quaternary structure, monomer. The cofactor is Zn(2+).

It localises to the cytoplasm. It catalyses the reaction tRNA(Met) + L-methionine + ATP = L-methionyl-tRNA(Met) + AMP + diphosphate. Its function is as follows. Is required not only for elongation of protein synthesis but also for the initiation of all mRNA translation through initiator tRNA(fMet) aminoacylation. The chain is Methionine--tRNA ligase (metG) from Synechocystis sp. (strain ATCC 27184 / PCC 6803 / Kazusa).